Reading from the N-terminus, the 182-residue chain is Large ribosomal subunit protein uL10 (182 aa).

The protein belongs to the universal ribosomal protein uL10 family. In terms of assembly, part of the ribosomal stalk of the 50S ribosomal subunit. The N-terminus interacts with L11 and the large rRNA to form the base of the stalk. The C-terminus forms an elongated spine to which L12 dimers bind in a sequential fashion forming a multimeric L10(L12)X complex.

In terms of biological role, forms part of the ribosomal stalk, playing a central role in the interaction of the ribosome with GTP-bound translation factors. This is Large ribosomal subunit protein uL10 from Koribacter versatilis (strain Ellin345).